The chain runs to 483 residues: PAT complex subunit CCDC47 (483 aa).

A signal peptide spans 1 to 20 (MKAFYAFCVVLLVFGSVSEA). Topologically, residues 21 to 135 (KFDDFEDEED…PAHLQNSWES (115 aa)) are cytoplasmic. The interval 46–119 (MEDSVTESPQ…DTSSNKNKDP (74 aa)) is disordered. Positions 60-104 (TEDDEDEATVELEGQDESQEGDFEDADTQEGDTESEPYDDEEFEG) are enriched in acidic residues. Positions 105–118 (YEDKPDTSSNKNKD) are enriched in basic and acidic residues. The helical transmembrane segment at 136–156 (YYLEILMVTGLLAYIMNYIIG) threads the bilayer. Over 157–483 (KNKNSRLAQA…KMKQIKVKAM (327 aa)) the chain is Lumenal. The N-linked (GlcNAc...) asparagine glycan is linked to asparagine 178. Residues 424–483 (QRQEAAQSRREEKKRAEKERIMNEEDPEKQRRLEEAALRREQKKLEKKQMKMKQIKVKAM) are disordered. A compositionally biased stretch (basic and acidic residues) spans 430-472 (QSRREEKKRAEKERIMNEEDPEKQRRLEEAALRREQKKLEKKQ). A coiled-coil region spans residues 450-483 (PEKQRRLEEAALRREQKKLEKKQMKMKQIKVKAM). Residues 473–483 (MKMKQIKVKAM) are compositionally biased toward basic residues.

Belongs to the CCDC47 family. Component of the PAT complex, composed of WDR83OS/Asterix and CCDC47. The PAT complex is part of the multi-pass translocon (MPT) complex, composed of three subcomplexes, the GEL complex (composed of RAB5IF/OPTI and TMCO1), the BOS complex (composed of NCLN/Nicalin, NOMO1 and TMEM147) and the PAT complex (composed of WDR83OS/Asterix and CCDC47). The MPT complex associates with the SEC61 complex. Interacts with VCP, HSPA5, DERL1, DERL2 and SELENOS. As to expression, in the embryo, expressed in the endodermal layer of the yolk sac and in the small intestine.

Its subcellular location is the endoplasmic reticulum membrane. It is found in the rough endoplasmic reticulum membrane. In terms of biological role, component of the multi-pass translocon (MPT) complex that mediates insertion of multi-pass membrane proteins into the lipid bilayer of membranes. The MPT complex takes over after the SEC61 complex: following membrane insertion of the first few transmembrane segments of proteins by the SEC61 complex, the MPT complex occludes the lateral gate of the SEC61 complex to promote insertion of subsequent transmembrane regions. Within the MPT complex, the PAT subcomplex sequesters any highly polar regions in the transmembrane domains away from the non-polar membrane environment until they can be buried in the interior of the fully assembled protein. Within the PAT subcomplex, CCDC47 occludes the lateral gate of the SEC61 complex. Involved in the regulation of calcium ion homeostasis in the ER. Required for proper protein degradation via the ERAD (ER-associated degradation) pathway. Has an essential role in the maintenance of ER organization during embryogenesis. This Mus musculus (Mouse) protein is PAT complex subunit CCDC47.